Consider the following 205-residue polypeptide: Protein-L-isoaspartate O-methyltransferase (205 aa).

Residue S52 is part of the active site.

Belongs to the methyltransferase superfamily. L-isoaspartyl/D-aspartyl protein methyltransferase family.

The protein resides in the cytoplasm. It carries out the reaction [protein]-L-isoaspartate + S-adenosyl-L-methionine = [protein]-L-isoaspartate alpha-methyl ester + S-adenosyl-L-homocysteine. Functionally, catalyzes the methyl esterification of L-isoaspartyl residues in peptides and proteins that result from spontaneous decomposition of normal L-aspartyl and L-asparaginyl residues. It plays a role in the repair and/or degradation of damaged proteins. In Gloeobacter violaceus (strain ATCC 29082 / PCC 7421), this protein is Protein-L-isoaspartate O-methyltransferase.